A 102-amino-acid polypeptide reads, in one-letter code: Large ribosomal subunit protein bL21 (102 aa).

It belongs to the bacterial ribosomal protein bL21 family. Part of the 50S ribosomal subunit. Contacts protein L20.

Its function is as follows. This protein binds to 23S rRNA in the presence of protein L20. In Trichlorobacter lovleyi (strain ATCC BAA-1151 / DSM 17278 / SZ) (Geobacter lovleyi), this protein is Large ribosomal subunit protein bL21.